A 172-amino-acid polypeptide reads, in one-letter code: MVGPAPRRRLRPLAALALVLALAPGLPTARAGQTPRPAERGPPVRLFTEEELARYGGEEEDQPIYLAVKGVVFDVTSGKEFYGRGAPYNALTGKDSTRGVAKMSLDPADLTHDTTGLTAKELEALDEVFTKVYKAKYPIVGYTARRILNEDGSPNLDFKPEDQPHFDIKDEF.

The first 31 residues, 1-31 (MVGPAPRRRLRPLAALALVLALAPGLPTARA), serve as a signal peptide directing secretion. Residues 44 to 129 (VRLFTEEELA…KELEALDEVF (86 aa)) enclose the Cytochrome b5 heme-binding domain. Lysine 136 is subject to N6-acetyllysine. The interval 151–172 (DGSPNLDFKPEDQPHFDIKDEF) is disordered. A compositionally biased stretch (basic and acidic residues) spans 158–172 (FKPEDQPHFDIKDEF).

The protein belongs to the cytochrome b5 family. MAPR subfamily. In terms of assembly, interacts with PINK1 and PARK7. As to expression, ubiquitously expressed with high expression in heart. Over-expressed in various tumors including carcinomas of the uterine cervix, lymphoma, colon, lung, skin and leukemia, as well as carcinoma of the breast.

It is found in the secreted. Its subcellular location is the extracellular space. The protein resides in the mitochondrion. The protein localises to the endoplasmic reticulum. Functionally, acts as a neurotrophic factor in postnatal mature neurons enhancing neuronal survival. Promotes cell proliferation and neurogenesis in undifferentiated neural progenitor cells at the embryonic stage and inhibits differentiation of astrocytes. Its neurotrophic activity is exerted via MAPK1/ERK2, MAPK3/ERK1 and AKT1/AKT pathways. Neurotrophic activity is enhanced by binding to heme. Also acts as an anorexigenic neurotrophic factor that contributes to energy balance. This Homo sapiens (Human) protein is Neudesin.